We begin with the raw amino-acid sequence, 107 residues long: Flagellar transcriptional regulator FlhD (107 aa).

It belongs to the FlhD family. As to quaternary structure, homodimer; disulfide-linked. Forms a heterohexamer composed of two FlhC and four FlhD subunits. Each FlhC binds a FlhD dimer, forming a heterotrimer, and a hexamer assembles by dimerization of two heterotrimers.

Its subcellular location is the cytoplasm. Its function is as follows. Functions in complex with FlhC as a master transcriptional regulator that regulates transcription of several flagellar and non-flagellar operons by binding to their promoter region. Activates expression of class 2 flagellar genes, including fliA, which is a flagellum-specific sigma factor that turns on the class 3 genes. Also regulates genes whose products function in a variety of physiological pathways. This is Flagellar transcriptional regulator FlhD from Bordetella bronchiseptica (strain ATCC BAA-588 / NCTC 13252 / RB50) (Alcaligenes bronchisepticus).